A 126-amino-acid chain; its full sequence is uncharacterized protein (126 aa).

One can recognise a VOC domain in the interval 4–126; it reads RIDHTGIMVR…DGEWIEFFQR (123 aa). Residues His7, Glu42, His74, and Glu122 each contribute to the a divalent metal cation site.

It belongs to the glyoxalase I family.

This is an uncharacterized protein from Bacillus subtilis (strain 168).